The following is a 279-amino-acid chain: tRNA (guanine-N(1)-)-methyltransferase (279 aa).

S-adenosyl-L-methionine contacts are provided by residues glycine 132 and 152-157 (IGDYVL).

The protein belongs to the RNA methyltransferase TrmD family. Homodimer.

It is found in the cytoplasm. The catalysed reaction is guanosine(37) in tRNA + S-adenosyl-L-methionine = N(1)-methylguanosine(37) in tRNA + S-adenosyl-L-homocysteine + H(+). In terms of biological role, specifically methylates guanosine-37 in various tRNAs. This Saccharophagus degradans (strain 2-40 / ATCC 43961 / DSM 17024) protein is tRNA (guanine-N(1)-)-methyltransferase.